The primary structure comprises 560 residues: Protein DA1-related 7 (560 aa).

UIM domains follow at residues 43–62 (SEAD…QETS), 92–111 (EEDQ…KGKS), and 155–174 (NEDA…KGQI). The LIM zinc-binding domain maps to 199-269 (SICDGCKSAI…HVCKKKFPGR (71 aa)).

As to quaternary structure, interacts with ubiquitin.

Functionally, ubiquitin receptor that probably regulates developmental process. The protein is Protein DA1-related 7 (DAR7) of Arabidopsis thaliana (Mouse-ear cress).